We begin with the raw amino-acid sequence, 339 residues long: Biotin synthase (339 aa).

The 228-residue stretch at 55–282 (NAVQLSTLLS…KAVVRLSAGR (228 aa)) folds into the Radical SAM core domain. The [4Fe-4S] cluster site is built by Cys-70, Cys-74, and Cys-77. Residues Cys-114, Cys-145, Cys-205, and Arg-277 each contribute to the [2Fe-2S] cluster site.

The protein belongs to the radical SAM superfamily. Biotin synthase family. Homodimer. It depends on [4Fe-4S] cluster as a cofactor. [2Fe-2S] cluster is required as a cofactor.

It carries out the reaction (4R,5S)-dethiobiotin + (sulfur carrier)-SH + 2 reduced [2Fe-2S]-[ferredoxin] + 2 S-adenosyl-L-methionine = (sulfur carrier)-H + biotin + 2 5'-deoxyadenosine + 2 L-methionine + 2 oxidized [2Fe-2S]-[ferredoxin]. The protein operates within cofactor biosynthesis; biotin biosynthesis; biotin from 7,8-diaminononanoate: step 2/2. Its function is as follows. Catalyzes the conversion of dethiobiotin (DTB) to biotin by the insertion of a sulfur atom into dethiobiotin via a radical-based mechanism. The sequence is that of Biotin synthase from Burkholderia ambifaria (strain MC40-6).